We begin with the raw amino-acid sequence, 310 residues long: NAD-dependent protein deacylase sirtuin-5, mitochondrial (310 aa).

A mitochondrion-targeting transit peptide spans Met1 to Pro36. The 271-residue stretch at Ser37–Gly307 folds into the Deacetylase sirtuin-type domain. Gly58–Trp77 serves as a coordination point for NAD(+). Positions 102 and 105 each coordinate substrate. Gln140–Asp143 is an NAD(+) binding site. Catalysis depends on His158, which acts as the Proton acceptor. Zn(2+)-binding residues include Cys166, Cys169, Cys207, and Cys212. NAD(+) is bound by residues Gly249–Ser251, Asn275–Glu277, and Cys293.

This sequence belongs to the sirtuin family. Class III subfamily. Monomer. Homodimer. Interacts with CPS1. Interacts with PCCA. Zn(2+) is required as a cofactor.

The protein localises to the mitochondrion. It localises to the cytoplasm. The protein resides in the cytosol. It is found in the nucleus. The catalysed reaction is N(6)-malonyl-L-lysyl-[protein] + NAD(+) + H2O = 2''-O-malonyl-ADP-D-ribose + nicotinamide + L-lysyl-[protein]. It carries out the reaction N(6)-succinyl-L-lysyl-[protein] + NAD(+) + H2O = 2''-O-succinyl-ADP-D-ribose + nicotinamide + L-lysyl-[protein]. The enzyme catalyses N(6)-glutaryl-L-lysyl-[protein] + NAD(+) + H2O = 2''-O-glutaryl-ADP-D-ribose + nicotinamide + L-lysyl-[protein]. In terms of biological role, NAD-dependent lysine demalonylase, desuccinylase and deglutarylase that specifically removes malonyl, succinyl and glutaryl groups on target proteins. Activates CPS1 and contributes to the regulation of blood ammonia levels during prolonged fasting: acts by mediating desuccinylation and deglutarylation of CPS1, thereby increasing CPS1 activity in response to elevated NAD levels during fasting. Activates SOD1 by mediating its desuccinylation, leading to reduced reactive oxygen species. Activates SHMT2 by mediating its desuccinylation. Modulates ketogenesis through the desuccinylation and activation of HMGCS2. Has weak NAD-dependent protein deacetylase activity; however this activity may not be physiologically relevant in vivo. Can deacetylate cytochrome c (CYCS) and a number of other proteins in vitro such as UOX. The chain is NAD-dependent protein deacylase sirtuin-5, mitochondrial from Canis lupus familiaris (Dog).